Reading from the N-terminus, the 112-residue chain is MAEDIEEIRRRKLMELQKKYLEQQKAQEEAERQQALIEAQIQAILRRILTPEARERLARVKLVKPELARQVELILVQLYQAGQITEKIDDAKMKKILAQIEARTRREFRIKW.

It belongs to the PDCD5 family.

The sequence is that of DNA-binding protein PF1087 from Pyrococcus furiosus (strain ATCC 43587 / DSM 3638 / JCM 8422 / Vc1).